A 199-amino-acid polypeptide reads, in one-letter code: Imidazoleglycerol-phosphate dehydratase (199 aa).

Belongs to the imidazoleglycerol-phosphate dehydratase family.

It is found in the cytoplasm. The catalysed reaction is D-erythro-1-(imidazol-4-yl)glycerol 3-phosphate = 3-(imidazol-4-yl)-2-oxopropyl phosphate + H2O. The protein operates within amino-acid biosynthesis; L-histidine biosynthesis; L-histidine from 5-phospho-alpha-D-ribose 1-diphosphate: step 6/9. This is Imidazoleglycerol-phosphate dehydratase from Bifidobacterium longum (strain NCC 2705).